The chain runs to 304 residues: uncharacterized protein (304 aa).

10 consecutive transmembrane segments (helical) span residues 5 to 25 (TIIL…FIAI), 42 to 62 (FLLA…PLLF), 68 to 88 (IFQL…ILYG), 96 to 116 (IASV…FIFF), 120 to 140 (LYFF…IILF), 150 to 170 (TIKG…IYLY), 178 to 198 (ISIL…FLVI), 215 to 235 (ILAT…SYFY), 245 to 265 (ASTI…FVWG), and 268 to 288 (IGID…ITIF). EamA domains lie at 16–140 (ITWG…IILF) and 162–288 (TSHA…ITIF).

It belongs to the EamA transporter family.

Its subcellular location is the cell membrane. This is an uncharacterized protein from Buchnera aphidicola subsp. Schlechtendalia chinensis.